The following is a 207-amino-acid chain: UPF0328 protein ECU02_1590/ECU04_0060/ECU08_2120 (207 aa).

Disordered stretches follow at residues 1–154 (MPRP…HSHT) and 180–207 (GRLHGSPTKGAQTAQQAQPHPPKQLATL). Basic and acidic residues-rich tracts occupy residues 14–24 (DHPDFRSESSA) and 75–97 (HTEGCHTHEANPEPNTKHTETES). Polar residues-rich tracts occupy residues 98–121 (PKPQTSTQHHTPITIPSSLLSQNT) and 133–149 (SRPSTIPANTYQPQSPH).

Belongs to the UPF0328 family.

This chain is UPF0328 protein ECU02_1590/ECU04_0060/ECU08_2120, found in Encephalitozoon cuniculi (strain GB-M1) (Microsporidian parasite).